A 149-amino-acid chain; its full sequence is MRAVIQRSKEASVTVANNIVGEIEHGLVVFLGVQASDTEKEIKWMAEKIRHLRIFEDDEGKMNHSLQDRGGKMLIVSQFTLYGDCRKGRRPSYSQAANPEFAKRIYDLFIEEVKKSGLEVATGIFQADMDVQLINDGPVTMLLDSEKIF.

The short motif at Gly-137–Pro-138 is the Gly-cisPro motif, important for rejection of L-amino acids element.

The protein belongs to the DTD family. Homodimer.

It localises to the cytoplasm. It catalyses the reaction glycyl-tRNA(Ala) + H2O = tRNA(Ala) + glycine + H(+). The enzyme catalyses a D-aminoacyl-tRNA + H2O = a tRNA + a D-alpha-amino acid + H(+). Functionally, an aminoacyl-tRNA editing enzyme that deacylates mischarged D-aminoacyl-tRNAs. Also deacylates mischarged glycyl-tRNA(Ala), protecting cells against glycine mischarging by AlaRS. Acts via tRNA-based rather than protein-based catalysis; rejects L-amino acids rather than detecting D-amino acids in the active site. By recycling D-aminoacyl-tRNA to D-amino acids and free tRNA molecules, this enzyme counteracts the toxicity associated with the formation of D-aminoacyl-tRNA entities in vivo and helps enforce protein L-homochirality. This is D-aminoacyl-tRNA deacylase from Desulfotalea psychrophila (strain LSv54 / DSM 12343).